Consider the following 316-residue polypeptide: Olfactory receptor 2K2 (316 aa).

Residues 1 to 20 (MQGENFTIWSIFFLEGFSQY) are Extracellular-facing. N5 is a glycosylation site (N-linked (GlcNAc...) asparagine). The chain crosses the membrane as a helical span at residues 21–41 (PGLEVVLFVFSLVMYLTTLLG). The Cytoplasmic portion of the chain corresponds to 42 to 65 (NSTLILITILDSRLKTPMYLFLGN). Residues 66-86 (LSFMDICYTSASVPTLLVNLL) traverse the membrane as a helical segment. Residues 87 to 97 (SSQKTIIFSGC) are Extracellular-facing. C97 and C188 are oxidised to a cystine. A helical membrane pass occupies residues 98 to 118 (AVQMYLSLAMGSTECVLLAVM). Over 119–143 (AYDRYVAICNPLRYSIIMNRCVCAR) the chain is Cytoplasmic. The chain crosses the membrane as a helical span at residues 144 to 164 (MATVSWVTGCLTALLETSFAL). At 165–199 (QIPLCGNLIDHFTCEILAVLKLACTSSLLMNTIML) the chain is on the extracellular side. A helical membrane pass occupies residues 200 to 220 (VVSILLLPIPMLLVCISYIFI). Residues 221 to 238 (LSTILRITSAEGRNKAFS) are Cytoplasmic-facing. A helical membrane pass occupies residues 239-259 (TCGAHLTVVILYYGAALSMYL). Residues 260–270 (KPSSSNAQKID) are Extracellular-facing. A helical membrane pass occupies residues 271–291 (KIISLLYGVLTPMLNPIIYSL). The Cytoplasmic portion of the chain corresponds to 292-316 (RNKEVKDAMKKLLGKITLHQTHEHL).

The protein belongs to the G-protein coupled receptor 1 family.

The protein localises to the cell membrane. Functionally, odorant receptor. In Homo sapiens (Human), this protein is Olfactory receptor 2K2 (OR2K2).